Consider the following 395-residue polypeptide: F-box/kelch-repeat protein At3g13680 (395 aa).

An F-box domain is found at 1 to 47 (MTTMGDLPGDLVEEILSRVPLTSLRAIRSTCQKWNSLSKSQICGRKA). Kelch repeat units lie at residues 154–202 (ILRI…SLKG), 210–256 (KKET…VSLA), 265–314 (VLYQ…FIDE), and 337–383 (IVYI…LVQL).

The chain is F-box/kelch-repeat protein At3g13680 from Arabidopsis thaliana (Mouse-ear cress).